The chain runs to 426 residues: Probable glucose-6-phosphate isomerase (426 aa).

Glu272 acts as the Proton donor in catalysis. Residues His293 and Lys404 contribute to the active site.

The protein belongs to the GPI family.

It is found in the cytoplasm. It carries out the reaction alpha-D-glucose 6-phosphate = beta-D-fructose 6-phosphate. It functions in the pathway carbohydrate biosynthesis; gluconeogenesis. The protein operates within carbohydrate degradation; glycolysis; D-glyceraldehyde 3-phosphate and glycerone phosphate from D-glucose: step 2/4. Functionally, catalyzes the reversible isomerization of glucose-6-phosphate to fructose-6-phosphate. This Halobacterium salinarum (strain ATCC 700922 / JCM 11081 / NRC-1) (Halobacterium halobium) protein is Probable glucose-6-phosphate isomerase.